We begin with the raw amino-acid sequence, 216 residues long: Probable GTP-binding protein EngB (216 aa).

Positions 24-205 constitute an EngB-type G domain; that stretch reads ATPEIAFVGR…WARLAALAAE (182 aa). Residues 32 to 39, 59 to 63, 86 to 89, 153 to 156, and 184 to 186 each bind GTP; these read GRSNVGKS, GRTRA, DLPG, TKTD, and FSA. Mg(2+) is bound by residues serine 39 and threonine 61.

The protein belongs to the TRAFAC class TrmE-Era-EngA-EngB-Septin-like GTPase superfamily. EngB GTPase family. Mg(2+) serves as cofactor.

In terms of biological role, necessary for normal cell division and for the maintenance of normal septation. This is Probable GTP-binding protein EngB from Anaeromyxobacter dehalogenans (strain 2CP-C).